We begin with the raw amino-acid sequence, 447 residues long: Cysteine--tRNA ligase (447 aa).

A Zn(2+)-binding site is contributed by C28. Positions 30–40 match the 'HIGH' region motif; the sequence is PTVYNYIHVGN. The Zn(2+) site is built by C211, H236, and E240. Positions 268–272 match the 'KMSKS' region motif; sequence KMSKS. K271 is an ATP binding site.

This sequence belongs to the class-I aminoacyl-tRNA synthetase family. Monomer. It depends on Zn(2+) as a cofactor.

The protein localises to the cytoplasm. It carries out the reaction tRNA(Cys) + L-cysteine + ATP = L-cysteinyl-tRNA(Cys) + AMP + diphosphate. The polypeptide is Cysteine--tRNA ligase (Streptococcus pneumoniae serotype 4 (strain ATCC BAA-334 / TIGR4)).